The sequence spans 387 residues: S-adenosylmethionine synthase (387 aa).

Histidine 17 lines the ATP pocket. Aspartate 19 contacts Mg(2+). Glutamate 45 is a binding site for K(+). Positions 58 and 101 each coordinate L-methionine. Positions glutamine 101–arginine 111 are flexible loop. ATP contacts are provided by residues aspartate 168–lysine 170, arginine 234–phenylalanine 235, aspartate 243, arginine 249–lysine 250, alanine 266, and lysine 270. Residue aspartate 243 coordinates L-methionine. Lysine 274 lines the L-methionine pocket.

This sequence belongs to the AdoMet synthase family. As to quaternary structure, homotetramer; dimer of dimers. Mg(2+) is required as a cofactor. Requires K(+) as cofactor.

The protein resides in the cytoplasm. The catalysed reaction is L-methionine + ATP + H2O = S-adenosyl-L-methionine + phosphate + diphosphate. It participates in amino-acid biosynthesis; S-adenosyl-L-methionine biosynthesis; S-adenosyl-L-methionine from L-methionine: step 1/1. Its function is as follows. Catalyzes the formation of S-adenosylmethionine (AdoMet) from methionine and ATP. The overall synthetic reaction is composed of two sequential steps, AdoMet formation and the subsequent tripolyphosphate hydrolysis which occurs prior to release of AdoMet from the enzyme. This is S-adenosylmethionine synthase from Bordetella petrii (strain ATCC BAA-461 / DSM 12804 / CCUG 43448).